Reading from the N-terminus, the 358-residue chain is Probable branched-chain-amino-acid aminotransferase (358 aa).

The residue at position 196 (K196) is an N6-(pyridoxal phosphate)lysine.

The protein belongs to the class-IV pyridoxal-phosphate-dependent aminotransferase family. It depends on pyridoxal 5'-phosphate as a cofactor.

The enzyme catalyses L-leucine + 2-oxoglutarate = 4-methyl-2-oxopentanoate + L-glutamate. It carries out the reaction L-isoleucine + 2-oxoglutarate = (S)-3-methyl-2-oxopentanoate + L-glutamate. It catalyses the reaction L-valine + 2-oxoglutarate = 3-methyl-2-oxobutanoate + L-glutamate. It functions in the pathway amino-acid biosynthesis; L-isoleucine biosynthesis; L-isoleucine from 2-oxobutanoate: step 4/4. Its pathway is amino-acid biosynthesis; L-leucine biosynthesis; L-leucine from 3-methyl-2-oxobutanoate: step 4/4. It participates in amino-acid biosynthesis; L-valine biosynthesis; L-valine from pyruvate: step 4/4. Its function is as follows. Acts on leucine, isoleucine and valine. This Staphylococcus aureus (strain N315) protein is Probable branched-chain-amino-acid aminotransferase (ilvE).